Reading from the N-terminus, the 910-residue chain is Protein translocase subunit SecA (910 aa).

ATP contacts are provided by residues Q87, 105–109, and D512; that span reads GEGKT. 3 stretches are compositionally biased toward basic and acidic residues: residues 561-571, 841-853, and 880-890; these read RHESRRIDNQL, EEER…ELAR, and TFEREARKVGR. Disordered stretches follow at residues 561–584 and 835–910; these read RHES…AGSS and EEVD…GKIN. Zn(2+)-binding residues include C894, C896, C905, and H906. The segment covering 900–910 has biased composition (basic residues); that stretch reads KKYKQCHGKIN.

The protein belongs to the SecA family. As to quaternary structure, monomer and homodimer. Part of the essential Sec protein translocation apparatus which comprises SecA, SecYEG and auxiliary proteins SecDF-YajC and YidC. Zn(2+) is required as a cofactor.

The protein localises to the cell inner membrane. It localises to the cytoplasm. The catalysed reaction is ATP + H2O + cellular proteinSide 1 = ADP + phosphate + cellular proteinSide 2.. Its function is as follows. Part of the Sec protein translocase complex. Interacts with the SecYEG preprotein conducting channel. Has a central role in coupling the hydrolysis of ATP to the transfer of proteins into and across the cell membrane, serving both as a receptor for the preprotein-SecB complex and as an ATP-driven molecular motor driving the stepwise translocation of polypeptide chains across the membrane. The sequence is that of Protein translocase subunit SecA from Photobacterium profundum (strain SS9).